Reading from the N-terminus, the 160-residue chain is Keratin-associated protein 13-4 (160 aa).

4 repeat units span residues 41–50 (CQLRSSLYRD), 51–60 (CQKTCWEPAS), 61–70 (CQKSCYRPRT), and 77–86 (CQTTCSGSLG). Residues 41-86 (CQLRSSLYRDCQKTCWEPASCQKSCYRPRTSILCCPCQTTCSGSLG) are 4 X 10 AA approximate repeats.

Belongs to the PMG family. In terms of assembly, interacts with hair keratins.

Its function is as follows. In the hair cortex, hair keratin intermediate filaments are embedded in an interfilamentous matrix, consisting of hair keratin-associated proteins (KRTAP), which are essential for the formation of a rigid and resistant hair shaft through their extensive disulfide bond cross-linking with abundant cysteine residues of hair keratins. The matrix proteins include the high-sulfur and high-glycine-tyrosine keratins. This chain is Keratin-associated protein 13-4 (KRTAP13-4), found in Homo sapiens (Human).